A 445-amino-acid polypeptide reads, in one-letter code: Phosphoglucosamine mutase 1 (445 aa).

S102 acts as the Phosphoserine intermediate in catalysis. Positions 102, 241, 243, and 245 each coordinate Mg(2+). S102 carries the phosphoserine modification.

This sequence belongs to the phosphohexose mutase family. Mg(2+) is required as a cofactor. Post-translationally, activated by phosphorylation.

The enzyme catalyses alpha-D-glucosamine 1-phosphate = D-glucosamine 6-phosphate. In terms of biological role, catalyzes the conversion of glucosamine-6-phosphate to glucosamine-1-phosphate. The chain is Phosphoglucosamine mutase 1 from Shewanella frigidimarina (strain NCIMB 400).